The sequence spans 130 residues: Phosphoribosyl-AMP cyclohydrolase (130 aa).

Asp77 lines the Mg(2+) pocket. Zn(2+) is bound at residue Cys78. 2 residues coordinate Mg(2+): Asp79 and Asp81. Residues Cys95 and Cys102 each contribute to the Zn(2+) site.

The protein belongs to the PRA-CH family. In terms of assembly, homodimer. Mg(2+) is required as a cofactor. It depends on Zn(2+) as a cofactor.

It is found in the cytoplasm. It catalyses the reaction 1-(5-phospho-beta-D-ribosyl)-5'-AMP + H2O = 1-(5-phospho-beta-D-ribosyl)-5-[(5-phospho-beta-D-ribosylamino)methylideneamino]imidazole-4-carboxamide. The protein operates within amino-acid biosynthesis; L-histidine biosynthesis; L-histidine from 5-phospho-alpha-D-ribose 1-diphosphate: step 3/9. Its function is as follows. Catalyzes the hydrolysis of the adenine ring of phosphoribosyl-AMP. The protein is Phosphoribosyl-AMP cyclohydrolase of Pseudomonas putida (strain GB-1).